The chain runs to 170 residues: 3-hydroxydecanoyl-[acyl-carrier-protein] dehydratase (170 aa).

His69 is a catalytic residue.

Belongs to the thioester dehydratase family. FabA subfamily. In terms of assembly, homodimer.

It localises to the cytoplasm. It catalyses the reaction a (3R)-hydroxyacyl-[ACP] = a (2E)-enoyl-[ACP] + H2O. The catalysed reaction is (3R)-hydroxydecanoyl-[ACP] = (2E)-decenoyl-[ACP] + H2O. The enzyme catalyses (2E)-decenoyl-[ACP] = (3Z)-decenoyl-[ACP]. The protein operates within lipid metabolism; fatty acid biosynthesis. Its function is as follows. Necessary for the introduction of cis unsaturation into fatty acids. Catalyzes the dehydration of (3R)-3-hydroxydecanoyl-ACP to E-(2)-decenoyl-ACP and then its isomerization to Z-(3)-decenoyl-ACP. Can catalyze the dehydratase reaction for beta-hydroxyacyl-ACPs with saturated chain lengths up to 16:0, being most active on intermediate chain length. This Idiomarina loihiensis (strain ATCC BAA-735 / DSM 15497 / L2-TR) protein is 3-hydroxydecanoyl-[acyl-carrier-protein] dehydratase.